Here is a 126-residue protein sequence, read N- to C-terminus: MAEAGAGLSETVTETTVTVTTEPENRSLTIKLRKRKPEKKVEWTSDTVDNEHMGRRSSKCCCIYEKPRAFGESSTESDEEEEEGCGHTHCVRGHRKGRRRATLGPTPTTPPQPPDPSQPPPGPMQH.

Residues methionine 1–asparagine 25 form a disordered region. Residue alanine 2 is modified to N-acetylalanine. A compositionally biased stretch (low complexity) spans glutamate 10–glutamate 22. An atypical RING finger domain 1 region spans residues histidine 52 to cysteine 62. Residues phenylalanine 70–histidine 126 are disordered. Serine 73 and serine 74 each carry phosphoserine. Threonine 75 bears the Phosphothreonine mark. Serine 77 carries the phosphoserine modification. The atypical RING finger domain 2 stretch occupies residues cysteine 85–histidine 94. Positions histidine 89–alanine 101 are enriched in basic residues. The segment covering proline 107–histidine 126 has biased composition (pro residues). Phosphothreonine is present on threonine 109.

Interacts with TLR2 and UBE2D2. Auto-ubiquitinated. As to expression, widely expressed.

It carries out the reaction S-ubiquitinyl-[E2 ubiquitin-conjugating enzyme]-L-cysteine + [acceptor protein]-L-lysine = [E2 ubiquitin-conjugating enzyme]-L-cysteine + N(6)-ubiquitinyl-[acceptor protein]-L-lysine.. It functions in the pathway protein modification; protein ubiquitination. In terms of biological role, atypical E3 ubiquitin-protein ligase which ubiquitinates TLR2 at 'Lys-754' leading to its degradation by the proteasome. Plays a role in regulating inflammatory cytokine release and gram-positive bacterial clearance by functioning, in part, through the ubiquitination and degradation of TLR2. Inhibitor of protein phosphatase 1. The chain is E3 ubiquitin-protein ligase PPP1R11 (PPP1R11) from Homo sapiens (Human).